Here is a 248-residue protein sequence, read N- to C-terminus: Probable transcriptional regulatory protein Mrad2831_3553 (248 aa).

It belongs to the TACO1 family.

It localises to the cytoplasm. In Methylobacterium radiotolerans (strain ATCC 27329 / DSM 1819 / JCM 2831 / NBRC 15690 / NCIMB 10815 / 0-1), this protein is Probable transcriptional regulatory protein Mrad2831_3553.